A 178-amino-acid polypeptide reads, in one-letter code: Ribosome maturation factor RimM (178 aa).

The 78-residue stretch at 93–170 folds into the PRC barrel domain; sequence EGSYYYHELR…ALTADAPAGL (78 aa).

It belongs to the RimM family. In terms of assembly, binds ribosomal protein uS19.

The protein localises to the cytoplasm. In terms of biological role, an accessory protein needed during the final step in the assembly of 30S ribosomal subunit, possibly for assembly of the head region. Essential for efficient processing of 16S rRNA. May be needed both before and after RbfA during the maturation of 16S rRNA. It has affinity for free ribosomal 30S subunits but not for 70S ribosomes. This Deinococcus geothermalis (strain DSM 11300 / CIP 105573 / AG-3a) protein is Ribosome maturation factor RimM.